The chain runs to 689 residues: Elongation factor G 1 (689 aa).

Positions 7-282 constitute a tr-type G domain; that stretch reads DQVRTIGIIS…AVVDFLPSPL (276 aa). GTP-binding positions include 16–23, 80–84, and 134–137; these read SHIDAGKT, DTPGH, and NKMD.

This sequence belongs to the TRAFAC class translation factor GTPase superfamily. Classic translation factor GTPase family. EF-G/EF-2 subfamily.

Its subcellular location is the cytoplasm. Its function is as follows. Catalyzes the GTP-dependent ribosomal translocation step during translation elongation. During this step, the ribosome changes from the pre-translocational (PRE) to the post-translocational (POST) state as the newly formed A-site-bound peptidyl-tRNA and P-site-bound deacylated tRNA move to the P and E sites, respectively. Catalyzes the coordinated movement of the two tRNA molecules, the mRNA and conformational changes in the ribosome. The polypeptide is Elongation factor G 1 (Geobacter sulfurreducens (strain ATCC 51573 / DSM 12127 / PCA)).